We begin with the raw amino-acid sequence, 336 residues long: WAT1-related protein At2g37450 (336 aa).

A run of 9 helical transmembrane segments spans residues A7 to T27, H45 to A65, T79 to F99, V115 to A135, G160 to I180, L189 to V209, L227 to V247, F255 to F275, and M279 to W299. 2 EamA domains span residues V63–M126 and F169–I298.

Belongs to the drug/metabolite transporter (DMT) superfamily. Plant drug/metabolite exporter (P-DME) (TC 2.A.7.4) family.

It is found in the membrane. The chain is WAT1-related protein At2g37450 from Arabidopsis thaliana (Mouse-ear cress).